A 512-amino-acid chain; its full sequence is SWI/SNF complex subunit SWI3A (512 aa).

The SWIRM domain maps to 13–110 (YTIPAQSSWF…FSSSLKKNDH (98 aa)). The SANT domain occupies 223–274 (SAAAVWTEEEILLLLESVLKHGDDWELISQSVSTKSRLDCISKLIELPFGEF). The segment at 291 to 325 (DENTEQVQTDGQEHEETETREEKEDRVNEDEPPAK) is disordered. The stretch at 424–488 (ALGAAAAQAK…IEGVKETIIQ (65 aa)) forms a coiled coil.

Homodimers and heterodimers. Interacts with SWI3B, SWI3C, BSH, and the C-terminus of FCA, but not with BRM or SWI3D. As to expression, expressed in roots, stems, leaves and flowers, but not in siliques.

It is found in the nucleus. In terms of biological role, component of a multiprotein complex equivalent of the SWI/SNF complex, an ATP-dependent chromatin-remodeling complex, which is required for the positive and negative regulation of gene expression of a large number of genes. It changes chromatin structure by altering DNA-histone contacts within a nucleosome, leading eventually to a change in nucleosome position, thus facilitating or repressing binding of gene-specific transcription factors. The protein is SWI/SNF complex subunit SWI3A (SWI3A) of Arabidopsis thaliana (Mouse-ear cress).